The sequence spans 381 residues: Early boundary activity protein 2 (381 aa).

A disordered region spans residues 210 to 245; that stretch reads NDAEDVPAPPSKRPRHMSTSSSESHIPDTASEKDEK. The 98-residue stretch at 268 to 365 folds into the BEN domain; the sequence is PNGTQITAHQ…TKCADTAKKY (98 aa).

In terms of assembly, the heterotrimeric Elba complex consists of Elba1, Elba2 and Elba3.

It localises to the nucleus. The heterotrimeric Elba complex is required for chromatin domain boundary function during early embryogenesis. It binds to a 8-bp sequence 5'-CCAATAAG-3' in the Fab-7 insulator or boundary element in the bithorax complex and contributes to its insulator or boundary activity. Elba2 can act as a transcriptional repressor and binds the palindromic sequence 5'-CCAATTGG-3' to mediate transcriptional repression. The chain is Early boundary activity protein 2 from Drosophila melanogaster (Fruit fly).